The sequence spans 135 residues: Peptide methionine sulfoxide reductase MsrB (135 aa).

The 123-residue stretch at 13–135 folds into the MsrB domain; that stretch reads DADWREQLTP…NGHSMVFEPV (123 aa). Zn(2+)-binding residues include Cys52, Cys55, Cys101, and Cys104. Cys124 functions as the Nucleophile in the catalytic mechanism.

The protein belongs to the MsrB Met sulfoxide reductase family. It depends on Zn(2+) as a cofactor.

The enzyme catalyses L-methionyl-[protein] + [thioredoxin]-disulfide + H2O = L-methionyl-(R)-S-oxide-[protein] + [thioredoxin]-dithiol. The chain is Peptide methionine sulfoxide reductase MsrB from Agrobacterium fabrum (strain C58 / ATCC 33970) (Agrobacterium tumefaciens (strain C58)).